The primary structure comprises 416 residues: D-amino acid dehydrogenase (416 aa).

Valine 3 to tyrosine 17 is an FAD binding site.

The protein belongs to the DadA oxidoreductase family. FAD serves as cofactor.

The catalysed reaction is a D-alpha-amino acid + A + H2O = a 2-oxocarboxylate + AH2 + NH4(+). It functions in the pathway amino-acid degradation; D-alanine degradation; NH(3) and pyruvate from D-alanine: step 1/1. In terms of biological role, oxidative deamination of D-amino acids. The protein is D-amino acid dehydrogenase of Sinorhizobium medicae (strain WSM419) (Ensifer medicae).